The sequence spans 231 residues: NADH-ubiquinone oxidoreductase chain 4 (231 aa).

6 helical membrane-spanning segments follow: residues 1-21, 34-54, 63-85, 89-111, 128-148, and 156-176; these read PIAG…YGII, LFLP…LTCL, IAYS…TPWG, AMAL…NTTY, ILPM…AIPP, and LLIM…LGLS.

This sequence belongs to the complex I subunit 4 family.

The protein resides in the mitochondrion membrane. It catalyses the reaction a ubiquinone + NADH + 5 H(+)(in) = a ubiquinol + NAD(+) + 4 H(+)(out). Its function is as follows. Core subunit of the mitochondrial membrane respiratory chain NADH dehydrogenase (Complex I) that is believed to belong to the minimal assembly required for catalysis. Complex I functions in the transfer of electrons from NADH to the respiratory chain. The immediate electron acceptor for the enzyme is believed to be ubiquinone. The chain is NADH-ubiquinone oxidoreductase chain 4 (MT-ND4) from Crotalus concolor (Midget faded rattlesnake).